The sequence spans 546 residues: CTP synthase (546 aa).

Residues 1 to 266 (MTKYIFVTGG…GDYLVERLGL (266 aa)) form an amidoligase domain region. Ser13 provides a ligand contact to CTP. Ser13 is a UTP binding site. ATP is bound at residue 14–19 (SVGKGI). Tyr54 contributes to the L-glutamine binding site. Asp71 is an ATP binding site. 2 residues coordinate Mg(2+): Asp71 and Glu141. Residues 148 to 150 (DIE), 187 to 192 (KTKPTQ), and Lys223 contribute to the CTP site. Residues 187 to 192 (KTKPTQ) and Lys223 each bind UTP. The region spanning 291–533 (PIALVGKYVE…VAAAAQTLLA (243 aa)) is the Glutamine amidotransferase type-1 domain. Position 353 (Gly353) interacts with L-glutamine. Cys380 (nucleophile; for glutamine hydrolysis) is an active-site residue. L-glutamine is bound by residues 381-384 (LGMQ), Glu404, and Arg461. Active-site residues include His506 and Glu508.

The protein belongs to the CTP synthase family. Homotetramer.

It catalyses the reaction UTP + L-glutamine + ATP + H2O = CTP + L-glutamate + ADP + phosphate + 2 H(+). It carries out the reaction L-glutamine + H2O = L-glutamate + NH4(+). The catalysed reaction is UTP + NH4(+) + ATP = CTP + ADP + phosphate + 2 H(+). It functions in the pathway pyrimidine metabolism; CTP biosynthesis via de novo pathway; CTP from UDP: step 2/2. With respect to regulation, allosterically activated by GTP, when glutamine is the substrate; GTP has no effect on the reaction when ammonia is the substrate. The allosteric effector GTP functions by stabilizing the protein conformation that binds the tetrahedral intermediate(s) formed during glutamine hydrolysis. Inhibited by the product CTP, via allosteric rather than competitive inhibition. Functionally, catalyzes the ATP-dependent amination of UTP to CTP with either L-glutamine or ammonia as the source of nitrogen. Regulates intracellular CTP levels through interactions with the four ribonucleotide triphosphates. The protein is CTP synthase of Chloroflexus aurantiacus (strain ATCC 29366 / DSM 635 / J-10-fl).